A 308-amino-acid polypeptide reads, in one-letter code: E3 ubiquitin-protein ligase SINAT2 (308 aa).

The RING-type zinc-finger motif lies at C60–R96. The tract at residues V110–R303 is SBD. The segment at S113 to K173 adopts an SIAH-type zinc-finger fold. C118, C125, H137, C141, C148, C155, H167, and H172 together coordinate Zn(2+).

This sequence belongs to the SINA (Seven in absentia) family. As to quaternary structure, interacts with RAP2-2. Interacts with SINAT6. Interacts with ATG6 and TRAF1A. Interacts with WAV3. Interacts with FREE1. Interacts with ELC/VPS23A.

The protein resides in the endosome. It localises to the multivesicular body. It is found in the cytoplasmic vesicle. The protein localises to the autophagosome. The enzyme catalyses S-ubiquitinyl-[E2 ubiquitin-conjugating enzyme]-L-cysteine + [acceptor protein]-L-lysine = [E2 ubiquitin-conjugating enzyme]-L-cysteine + N(6)-ubiquitinyl-[acceptor protein]-L-lysine.. The protein operates within protein modification; protein ubiquitination. Its function is as follows. E3 ubiquitin-protein ligase that mediates ubiquitination and subsequent proteasomal degradation of target proteins. E3 ubiquitin ligases accept ubiquitin from an E2 ubiquitin-conjugating enzyme in the form of a thioester and then directly transfers the ubiquitin to targeted substrates. It probably triggers the ubiquitin-mediated degradation of different substrates. Mediates the proteasomal-dependent degradation of ATG6, a component of the autophagosome complex. Requires TRAF1A/MUSE14 and TRAF1B/MUSE13 to target ATG6 for ubiquitination and subsequent regulation of autophagosome assembly. Modulates directly the ubiquitination and proteasomal-dependent degradation of FREE1, a component of the ESCRT-I complex. Modulates directly the ubiquitination and proteasomal-dependent degradation of ELC/VPS23A, a component of the ESCRT-I complex. The chain is E3 ubiquitin-protein ligase SINAT2 from Arabidopsis thaliana (Mouse-ear cress).